We begin with the raw amino-acid sequence, 638 residues long: MGKIIGIDLGTTNSCLAIIEGGKGRVIENSEGDRTTPSIVAYTKDGEVLVGAAAKRQAVTNPKNTFYAVKRLIGRKFGDAEVQKDLDLVPYKITQHDNGDAWVATADGKKLAPQEISAKVLEKMKKTAEDFLGEKVTEAVITVPAYFNDSQRQATKDAGRIAGLDVKRIINEPTAAALAYGLDKKGGDRKIAVYDLGGGTFDVSIIEIAEVDGEKQFEVLATNGDTFLGGEDFDKRVIDYLVDEFNKDQGIDLRKDPLALQRLKDAAERAKIELSSSQQTEVNLPYITADASGPKHLNIKLTRAKLEALVDDLVRKSIEPCRIALNDAGLRTSDVQEVILVGGQTRMPKVQQAVADFFGKEPRKDVNPDEAVALGAAIQGGVLAGDVKDVLLLDVTPLSLGIETMGGVFTKIIEKNTTIPTKASQVFSTAEDGQSAVTVHVLQGEREQARFNKSLAKFDLAGIEPAPRGQPQIEVSFDIDANGILHVSAKDKKTNKEQKVEVKAGSGLSDSEIQQMVADAEAHREEDKKFQELVQARNHADGLIHSTRSAIKEHGSKVGGELIGRVEASLAELEAAVKGDDKNQIEAKSKTLEEVAQSLHMAATAEQQSASTGAGAGSSAKVDDVVDAEFTEVKGDKK.

Thr-200 is modified (phosphothreonine; by autocatalysis). Positions Leu-599–Asp-623 are disordered. The segment covering Ser-609–Ala-620 has biased composition (low complexity).

This sequence belongs to the heat shock protein 70 family.

Functionally, acts as a chaperone. This is Chaperone protein DnaK from Xylella fastidiosa (strain M12).